Consider the following 224-residue polypeptide: Orotate phosphoribosyltransferase (224 aa).

Residue K29 coordinates 5-phospho-alpha-D-ribose 1-diphosphate. 37 to 38 contributes to the orotate binding site; that stretch reads FF. 5-phospho-alpha-D-ribose 1-diphosphate contacts are provided by residues 75–76, R105, K106, K109, H111, and 130–138; these read YK and DDVITAGTS. Orotate-binding residues include T134 and R162.

This sequence belongs to the purine/pyrimidine phosphoribosyltransferase family. PyrE subfamily. Homodimer. Requires Mg(2+) as cofactor.

The enzyme catalyses orotidine 5'-phosphate + diphosphate = orotate + 5-phospho-alpha-D-ribose 1-diphosphate. It participates in pyrimidine metabolism; UMP biosynthesis via de novo pathway; UMP from orotate: step 1/2. Functionally, catalyzes the transfer of a ribosyl phosphate group from 5-phosphoribose 1-diphosphate to orotate, leading to the formation of orotidine monophosphate (OMP). In Bordetella pertussis (strain Tohama I / ATCC BAA-589 / NCTC 13251), this protein is Orotate phosphoribosyltransferase.